The following is an 87-amino-acid chain: Large ribosomal subunit protein bL27 (87 aa).

A disordered region spans residues 1–21 (MAHKKAGGSSRNGRDSESKRL).

This sequence belongs to the bacterial ribosomal protein bL27 family.

The sequence is that of Large ribosomal subunit protein bL27 from Aromatoleum aromaticum (strain DSM 19018 / LMG 30748 / EbN1) (Azoarcus sp. (strain EbN1)).